Here is a 280-residue protein sequence, read N- to C-terminus: Protease HtpX (280 aa).

2 consecutive transmembrane segments (helical) span residues 7–26 and 30–49; these read TFILLASLTALLVVIGGLLG and GMLVALLFAGIMNFSAYWYS. Zn(2+) is bound at residue H129. E130 is a catalytic residue. Residue H133 coordinates Zn(2+). The next 2 helical transmembrane spans lie at 146-166 and 178-198; these read ATIAGAISGIANMFMWLSMFG and VVGMIMMIVAPLAAGLIQMAI. Zn(2+) is bound at residue E203.

This sequence belongs to the peptidase M48B family. Zn(2+) is required as a cofactor.

The protein resides in the cell inner membrane. In Legionella pneumophila (strain Corby), this protein is Protease HtpX.